The following is an 835-amino-acid chain: Probable alpha-glucuronidase A (835 aa).

The signal sequence occupies residues M1–A18. N49, N101, N148, N221, N278, N309, N342, N460, N522, N571, N677, and N727 each carry an N-linked (GlcNAc...) asparagine glycan.

The protein belongs to the glycosyl hydrolase 67 family.

The protein localises to the secreted. The catalysed reaction is an alpha-D-glucuronoside + H2O = D-glucuronate + an alcohol. In terms of biological role, alpha-glucuronidase involved in the hydrolysis of xylan, a major structural heterogeneous polysaccharide found in plant biomass representing the second most abundant polysaccharide in the biosphere, after cellulose. Releases 4-O-methylglucuronic acid from xylan. This is Probable alpha-glucuronidase A (aguA) from Aspergillus oryzae (strain ATCC 42149 / RIB 40) (Yellow koji mold).